A 145-amino-acid polypeptide reads, in one-letter code: UPF0735 ACT domain-containing protein CLD_1535 (145 aa).

Positions 69–144 constitute an ACT domain; that stretch reads TIGLLLGHER…NVIKVDLIAM (76 aa).

This sequence belongs to the UPF0735 family.

The polypeptide is UPF0735 ACT domain-containing protein CLD_1535 (Clostridium botulinum (strain Okra / Type B1)).